A 329-amino-acid polypeptide reads, in one-letter code: Meiotic drive suppressor wtf21 (329 aa).

A disordered region spans residues 1–68; sequence MKNNYTSLKS…RENNPSRSTD (68 aa). Residues 19 to 30 show a composition bias toward basic and acidic residues; it reads KTDHEIDLEKGP. 5 helical membrane-spanning segments follow: residues 73–95, 110–132, 165–182, 192–214, and 290–312; these read FLIKLLISFTPIYVLNVLAICYL, WTLFGFWCLVCTLALIFLTYFYE, IIIWILWLIICCILFVYI, ALICSTCTISAVLLLIVSSVCIP, and GIAFILGGIGNAMMGLANAIRGA.

It belongs to the WTF family. Homomer. Interacts with other proteins that exhibit high sequence similarity.

The protein localises to the spore membrane. It localises to the vacuole membrane. In terms of biological role, acts as a suppressor component of the dual wtf meiotic drive system, and can suppress but not confer meiotic drive by compatible poisons. Wtf meiotic drive systems promote unequal transmission of alleles from the parental zygote to progeny spores by encoding a poison and an antidote from the same locus; the poison is trans-acting and forms toxic aggregates in all spores within an ascus, wherease the antidote is spore-specific and targets aggregates for degradation by the vacuole. Meiotic drive by wtf systems therefore lead to poisoning of all progeny that do not inherit the dual poison/antidote allele, or express a compatible antidote. This Schizosaccharomyces pombe (strain 972 / ATCC 24843) (Fission yeast) protein is Meiotic drive suppressor wtf21.